A 512-amino-acid polypeptide reads, in one-letter code: Probable DNA ligase (512 aa).

Residue D217 participates in ATP binding. K219 (N6-AMP-lysine intermediate) is an active-site residue. Residues R224, R239, E268, F306, R377, and K383 each coordinate ATP.

The protein belongs to the ATP-dependent DNA ligase family. Mg(2+) is required as a cofactor.

The enzyme catalyses ATP + (deoxyribonucleotide)n-3'-hydroxyl + 5'-phospho-(deoxyribonucleotide)m = (deoxyribonucleotide)n+m + AMP + diphosphate.. Its function is as follows. DNA ligase that seals nicks in double-stranded DNA during DNA replication, DNA recombination and DNA repair. The protein is Probable DNA ligase of Beutenbergia cavernae (strain ATCC BAA-8 / DSM 12333 / CCUG 43141 / JCM 11478 / NBRC 16432 / NCIMB 13614 / HKI 0122).